Reading from the N-terminus, the 309-residue chain is Putative proline iminopeptidase (309 aa).

In terms of domain architecture, AB hydrolase-1 spans 33-291 (LYVHGGPGSG…LYVTNNAGHS (259 aa)). Catalysis depends on Ser-105, which acts as the Nucleophile. The active site involves Asp-262. Catalysis depends on His-290, which acts as the Proton donor.

Belongs to the peptidase S33 family.

It localises to the cytoplasm. The enzyme catalyses Release of N-terminal proline from a peptide.. In terms of biological role, specifically catalyzes the removal of N-terminal proline residues from peptides. This Mycoplasma pneumoniae (strain ATCC 29342 / M129 / Subtype 1) (Mycoplasmoides pneumoniae) protein is Putative proline iminopeptidase (pip).